The following is a 95-amino-acid chain: Large ribosomal subunit protein eL31 (95 aa).

The protein belongs to the eukaryotic ribosomal protein eL31 family.

The sequence is that of Large ribosomal subunit protein eL31 (rpl31e) from Pyrococcus horikoshii (strain ATCC 700860 / DSM 12428 / JCM 9974 / NBRC 100139 / OT-3).